Reading from the N-terminus, the 336-residue chain is 3-isopropylmalate dehydrogenase (336 aa).

Residues arginine 87, arginine 97, arginine 121, and aspartate 211 each contribute to the substrate site. Mg(2+) is bound by residues aspartate 211, aspartate 235, and aspartate 239. Residue 271–283 (GSAPDIAGQGIAD) coordinates NAD(+).

This sequence belongs to the isocitrate and isopropylmalate dehydrogenases family. LeuB type 2 subfamily. In terms of assembly, homodimer. The cofactor is Mg(2+). Mn(2+) serves as cofactor.

Its subcellular location is the cytoplasm. It catalyses the reaction (2R,3S)-3-isopropylmalate + NAD(+) = 4-methyl-2-oxopentanoate + CO2 + NADH. Its pathway is amino-acid biosynthesis; L-leucine biosynthesis; L-leucine from 3-methyl-2-oxobutanoate: step 3/4. Its function is as follows. Catalyzes the oxidation of 3-carboxy-2-hydroxy-4-methylpentanoate (3-isopropylmalate) to 3-carboxy-4-methyl-2-oxopentanoate. The product decarboxylates to 4-methyl-2 oxopentanoate. The chain is 3-isopropylmalate dehydrogenase from Mycolicibacterium gilvum (strain PYR-GCK) (Mycobacterium gilvum (strain PYR-GCK)).